Consider the following 352-residue polypeptide: Protein YpbB (352 aa).

In terms of assembly, interacts with RecS and SSB (ssbA); the 6 C-terminal residues of SSB are required for interaction with YpbB.

It localises to the cytoplasm. It is found in the nucleoid. The sequence is that of Protein YpbB (ypbB) from Bacillus subtilis (strain 168).